Consider the following 379-residue polypeptide: Probable pectin lyase A (379 aa).

An N-terminal signal peptide occupies residues M1–A20. 2 disulfides stabilise this stretch: C83-C102 and C92-C226. The N-linked (GlcNAc...) asparagine glycan is linked to N129. The active site involves R256. C322 and C330 are disulfide-bonded.

Belongs to the polysaccharide lyase 1 family.

It is found in the secreted. It carries out the reaction Eliminative cleavage of (1-&gt;4)-alpha-D-galacturonan methyl ester to give oligosaccharides with 4-deoxy-6-O-methyl-alpha-D-galact-4-enuronosyl groups at their non-reducing ends.. In terms of biological role, pectinolytic enzymes consist of four classes of enzymes: pectin lyase, polygalacturonase, pectin methylesterase and rhamnogalacturonase. Among pectinolytic enzymes, pectin lyase is the most important in depolymerization of pectin, since it cleaves internal glycosidic bonds of highly methylated pectins. The protein is Probable pectin lyase A (pelA) of Aspergillus niger (strain ATCC MYA-4892 / CBS 513.88 / FGSC A1513).